A 497-amino-acid chain; its full sequence is Maintenance of mitochondrial morphology protein 1 (497 aa).

The Lumenal portion of the chain corresponds to 1 to 28 (MSSVLNPSSPHSWDLCCSSSSNRSYHRP). A helical transmembrane segment spans residues 29–55 (THPIVGLLVGQLSVVLLIGAFIKFFIF). Residues 56-497 (GEAPPSPSRS…GSLPDAVPIT (442 aa)) lie on the Cytoplasmic side of the membrane. Disordered stretches follow at residues 60–107 (PSPS…SSST), 284–330 (ESST…STTG), 402–421 (TGVRGQEEQPDVSSSDAAGV), and 437–497 (EMLH…VPIT). Basic residues predominate over residues 66–77 (QTHRTSQHKRSY). Residues 81 to 94 (GARDLSPRTLKEKP) are compositionally biased toward basic and acidic residues. Polar residues-rich tracts occupy residues 95 to 107 (SSNVLRPVPSSST), 284 to 302 (ESSTNLTPTSSNIDTNLRS), and 311 to 330 (PQESSTTDEGSQGGATSTTG). Residues 140–393 (QPESLDWFNV…EPRVQVVALP (254 aa)) enclose the SMP-LTD domain. Residues 412–421 (DVSSSDAAGV) show a composition bias toward low complexity. Basic and acidic residues predominate over residues 440–451 (HAAREVDAEGLR). Residues 462–473 (GSSSKYAQQNQS) show a composition bias toward polar residues. A compositionally biased stretch (basic and acidic residues) spans 474–484 (SRERGRADDPF).

This sequence belongs to the MMM1 family. Homodimer. Component of the ER-mitochondria encounter structure (ERMES) or MDM complex, composed of MMM1, MDM10, MDM12 and MDM34. An MMM1 homodimer associates with one molecule of MDM12 on each side in a pairwise head-to-tail manner, and the SMP-LTD domains of MMM1 and MDM12 generate a continuous hydrophobic tunnel for phospholipid trafficking.

Its subcellular location is the endoplasmic reticulum membrane. In terms of biological role, component of the ERMES/MDM complex, which serves as a molecular tether to connect the endoplasmic reticulum (ER) and mitochondria. Components of this complex are involved in the control of mitochondrial shape and protein biogenesis, and function in nonvesicular lipid trafficking between the ER and mitochondria. The MDM12-MMM1 subcomplex functions in the major beta-barrel assembly pathway that is responsible for biogenesis of all outer membrane beta-barrel proteins, and acts in a late step after the SAM complex. The MDM10-MDM12-MMM1 subcomplex further acts in the TOM40-specific pathway after the action of the MDM12-MMM1 complex. Essential for establishing and maintaining the structure of mitochondria and maintenance of mtDNA nucleoids. This chain is Maintenance of mitochondrial morphology protein 1, found in Uncinocarpus reesii (strain UAMH 1704).